The chain runs to 212 residues: Large ribosomal subunit protein uL4 (212 aa).

This sequence belongs to the universal ribosomal protein uL4 family. As to quaternary structure, part of the 50S ribosomal subunit.

One of the primary rRNA binding proteins, this protein initially binds near the 5'-end of the 23S rRNA. It is important during the early stages of 50S assembly. It makes multiple contacts with different domains of the 23S rRNA in the assembled 50S subunit and ribosome. Functionally, forms part of the polypeptide exit tunnel. The chain is Large ribosomal subunit protein uL4 from Phenylobacterium zucineum (strain HLK1).